A 506-amino-acid polypeptide reads, in one-letter code: Lysine--tRNA ligase (506 aa).

Residues Glu416 and Glu423 each coordinate Mg(2+).

The protein belongs to the class-II aminoacyl-tRNA synthetase family. Homodimer. Requires Mg(2+) as cofactor.

It localises to the cytoplasm. The catalysed reaction is tRNA(Lys) + L-lysine + ATP = L-lysyl-tRNA(Lys) + AMP + diphosphate. In Pelotomaculum thermopropionicum (strain DSM 13744 / JCM 10971 / SI), this protein is Lysine--tRNA ligase.